Consider the following 401-residue polypeptide: Elongation factor Tu 1 (401 aa).

The 200-residue stretch at 10 to 209 (KPHVNVGTIG…AVDEYIPTPV (200 aa)) folds into the tr-type G domain. The segment at 19-26 (GHVDHGKT) is G1. 19 to 26 (GHVDHGKT) contributes to the GTP binding site. Residue Thr-26 coordinates Mg(2+). A G2 region spans residues 60–64 (GITIA). The G3 stretch occupies residues 81-84 (DCPG). Residues 81-85 (DCPGH) and 136-139 (NKVD) contribute to the GTP site. The tract at residues 136-139 (NKVD) is G4. The tract at residues 174–176 (SAL) is G5.

Belongs to the TRAFAC class translation factor GTPase superfamily. Classic translation factor GTPase family. EF-Tu/EF-1A subfamily. Monomer.

It localises to the cytoplasm. The enzyme catalyses GTP + H2O = GDP + phosphate + H(+). Its function is as follows. GTP hydrolase that promotes the GTP-dependent binding of aminoacyl-tRNA to the A-site of ribosomes during protein biosynthesis. This chain is Elongation factor Tu 1, found in Roseiflexus sp. (strain RS-1).